Here is a 383-residue protein sequence, read N- to C-terminus: tRNA (adenine(58)-N(1))-methyltransferase catalytic subunit TRM61 (383 aa).

S-adenosyl-L-methionine-binding positions include V94, S121–F124, E139, R144, D168–V169, and D203. S302 carries the phosphoserine modification.

It belongs to the class I-like SAM-binding methyltransferase superfamily. TRM61 family. As to quaternary structure, heterotetramer; composed of two copies of TRM6/GCD10 and two copies of TRM61/GCD14.

Its subcellular location is the nucleus. The catalysed reaction is adenosine(58) in tRNA + S-adenosyl-L-methionine = N(1)-methyladenosine(58) in tRNA + S-adenosyl-L-homocysteine + H(+). Its function is as follows. Catalytic subunit of tRNA (adenine-N(1)-)-methyltransferase, which catalyzes the formation of N(1)-methyladenine at position 58 (m1A58) in initiator methionyl-tRNA. GCD14 is also required for repression of GCN4 mRNA translation by the upstream open reading frames (uORFs) under conditions of amino acid sufficiency. This is tRNA (adenine(58)-N(1))-methyltransferase catalytic subunit TRM61 (GCD14) from Saccharomyces cerevisiae (strain ATCC 204508 / S288c) (Baker's yeast).